We begin with the raw amino-acid sequence, 204 residues long: Dual-action ribosomal maturation protein DarP (204 aa).

Disordered regions lie at residues 1–31 (MPPMTRKTRIQPIEPVAEEDDNGYDRPSKSQ) and 182–204 (GGASDSDDEAADDAGDDHDDDEA). Over residues 186 to 204 (DSDDEAADDAGDDHDDDEA) the composition is skewed to acidic residues.

The protein belongs to the DarP family.

It localises to the cytoplasm. Its function is as follows. Member of a network of 50S ribosomal subunit biogenesis factors which assembles along the 30S-50S interface, preventing incorrect 23S rRNA structures from forming. Promotes peptidyl transferase center (PTC) maturation. This chain is Dual-action ribosomal maturation protein DarP, found in Burkholderia orbicola (strain MC0-3).